A 452-amino-acid polypeptide reads, in one-letter code: UPF0761 membrane protein Bpet3042 (452 aa).

Transmembrane regions (helical) follow at residues 56-76 (VLGI…FPVF), 114-134 (LTAI…MTID), 153-173 (ALVY…SLWA), 195-215 (AISF…FVVV), 225-245 (ALVG…AFAY), and 259-279 (AFAT…AVLF).

Belongs to the UPF0761 family.

The protein resides in the cell inner membrane. The polypeptide is UPF0761 membrane protein Bpet3042 (Bordetella petrii (strain ATCC BAA-461 / DSM 12804 / CCUG 43448)).